The sequence spans 445 residues: UNC93-like protein MFSD11 (445 aa).

The helical transmembrane segment at 8-28 threads the bilayer; it reads LLNIVILGVGFMFMFTAFQTS. Asn40 is a glycosylation site (N-linked (GlcNAc...) asparagine). A run of 4 helical transmembrane segments spans residues 52 to 72, 74 to 94, 98 to 118, and 138 to 158; these read LAII…VIAV, GCQM…AMFI, TWSF…LWTA, and IFWA…YLAW. Asn163 carries N-linked (GlcNAc...) asparagine glycosylation. Helical transmembrane passes span 170–190, 239–259, 277–297, 309–329, 343–363, 385–405, and 415–435; these read RTVF…FFLI, MLLL…YSGV, LIGL…GLFG, PVVI…YLYM, LSAF…LLGL, APAF…AFFY, and LLIL…VEWG.

Belongs to the unc-93 family.

It localises to the membrane. The chain is UNC93-like protein MFSD11 (mfsd11) from Xenopus laevis (African clawed frog).